Consider the following 363-residue polypeptide: UDP-N-acetylglucosamine--N-acetylmuramyl-(pentapeptide) pyrophosphoryl-undecaprenol N-acetylglucosamine transferase (363 aa).

Residues 10-12 (TGG), Asn124, Ser195, Ile250, and Gln295 each bind UDP-N-acetyl-alpha-D-glucosamine.

It belongs to the glycosyltransferase 28 family. MurG subfamily.

It localises to the cell membrane. The catalysed reaction is di-trans,octa-cis-undecaprenyl diphospho-N-acetyl-alpha-D-muramoyl-L-alanyl-D-glutamyl-meso-2,6-diaminopimeloyl-D-alanyl-D-alanine + UDP-N-acetyl-alpha-D-glucosamine = di-trans,octa-cis-undecaprenyl diphospho-[N-acetyl-alpha-D-glucosaminyl-(1-&gt;4)]-N-acetyl-alpha-D-muramoyl-L-alanyl-D-glutamyl-meso-2,6-diaminopimeloyl-D-alanyl-D-alanine + UDP + H(+). It participates in cell wall biogenesis; peptidoglycan biosynthesis. Functionally, cell wall formation. Catalyzes the transfer of a GlcNAc subunit on undecaprenyl-pyrophosphoryl-MurNAc-pentapeptide (lipid intermediate I) to form undecaprenyl-pyrophosphoryl-MurNAc-(pentapeptide)GlcNAc (lipid intermediate II). The protein is UDP-N-acetylglucosamine--N-acetylmuramyl-(pentapeptide) pyrophosphoryl-undecaprenol N-acetylglucosamine transferase of Listeria monocytogenes serovar 1/2a (strain ATCC BAA-679 / EGD-e).